The primary structure comprises 408 residues: Formate-dependent phosphoribosylglycinamide formyltransferase (408 aa).

N(1)-(5-phospho-beta-D-ribosyl)glycinamide-binding positions include 25-26 (EL) and Glu85. Residues Arg118, Lys159, 164–169 (SSGKGQ), 199–202 (EAFV), and Glu207 contribute to the ATP site. The ATP-grasp domain occupies 123 to 318 (KLAAEELGLP…EFELHAKAIL (196 aa)). Residues Glu277 and Glu289 each coordinate Mg(2+). N(1)-(5-phospho-beta-D-ribosyl)glycinamide contacts are provided by residues Asp296, Lys365, and 372 to 373 (RR).

This sequence belongs to the PurK/PurT family. As to quaternary structure, homodimer.

The catalysed reaction is N(1)-(5-phospho-beta-D-ribosyl)glycinamide + formate + ATP = N(2)-formyl-N(1)-(5-phospho-beta-D-ribosyl)glycinamide + ADP + phosphate + H(+). The protein operates within purine metabolism; IMP biosynthesis via de novo pathway; N(2)-formyl-N(1)-(5-phospho-D-ribosyl)glycinamide from N(1)-(5-phospho-D-ribosyl)glycinamide (formate route): step 1/1. In terms of biological role, involved in the de novo purine biosynthesis. Catalyzes the transfer of formate to 5-phospho-ribosyl-glycinamide (GAR), producing 5-phospho-ribosyl-N-formylglycinamide (FGAR). Formate is provided by PurU via hydrolysis of 10-formyl-tetrahydrofolate. The polypeptide is Formate-dependent phosphoribosylglycinamide formyltransferase (Corynebacterium glutamicum (strain R)).